Reading from the N-terminus, the 66-residue chain is UPF0337 protein M6_Spy1542 (66 aa).

Residues M1–V10 show a composition bias toward basic and acidic residues. The disordered stretch occupies residues M1–G22.

This sequence belongs to the UPF0337 (CsbD) family.

The polypeptide is UPF0337 protein M6_Spy1542 (Streptococcus pyogenes serotype M6 (strain ATCC BAA-946 / MGAS10394)).